The sequence spans 300 residues: Dihydroorotate dehydrogenase B (NAD(+)), catalytic subunit (300 aa).

FMN is bound by residues serine 20 and 44–45 (KS). Substrate contacts are provided by residues lysine 44, 68–72 (NAMGL), and asparagine 122. Residue asparagine 122 participates in FMN binding. The active-site Nucleophile is the cysteine 125. FMN is bound by residues lysine 160 and isoleucine 186. Residue 187–188 (NT) coordinates substrate. FMN is bound by residues glycine 212, 238–239 (GG), and 260–261 (GT).

Belongs to the dihydroorotate dehydrogenase family. Type 1 subfamily. In terms of assembly, heterotetramer of 2 PyrK and 2 PyrD type B subunits. FMN is required as a cofactor.

The protein resides in the cytoplasm. It catalyses the reaction (S)-dihydroorotate + NAD(+) = orotate + NADH + H(+). Its pathway is pyrimidine metabolism; UMP biosynthesis via de novo pathway; orotate from (S)-dihydroorotate (NAD(+) route): step 1/1. Catalyzes the conversion of dihydroorotate to orotate with NAD(+) as electron acceptor. This Pyrococcus furiosus (strain ATCC 43587 / DSM 3638 / JCM 8422 / Vc1) protein is Dihydroorotate dehydrogenase B (NAD(+)), catalytic subunit (pyrD).